The primary structure comprises 476 residues: Serine protease HTRA4 (476 aa).

Residues 1 to 31 (MIRPQLRTAGLGRCLLPGLLLLLVPVLWAGA) form the signal peptide. The IGFBP N-terminal domain maps to 36–109 (TQPSCPAVCQ…PGFPSTCGCP (74 aa)). 8 cysteine pairs are disulfide-bonded: C40–C66, C44–C68, C49–C69, C55–C72, C80–C94, C88–C106, C108–C127, and C116–C152. Positions 88–154 (CAPGLQCLQP…VPVQWGNCGD (67 aa)) constitute a Kazal-like domain. Residues 202 to 362 (GSGFIVSEDG…IPSDRVRQFL (161 aa)) are serine protease. Catalysis depends on charge relay system residues H218, D248, and S326. Residues 383–474 (LQMLSLTVPL…NLLLTVIPET (92 aa)) form the PDZ domain.

It belongs to the peptidase S1C family.

The protein localises to the secreted. In terms of biological role, serine protease. The protein is Serine protease HTRA4 (HTRA4) of Homo sapiens (Human).